The chain runs to 361 residues: Glutamine synthetase (361 aa).

A GS beta-grasp domain is found at Cys-23–Lys-103. The 252-residue stretch at Gln-110–Gln-361 folds into the GS catalytic domain. Residue Glu-131 coordinates ATP. The Mn(2+) site is built by Glu-131, Glu-133, and Glu-200. Glu-200–Pro-205 is a binding site for ATP. An L-glutamate-binding site is contributed by Asp-243 to Trp-244. His-250 provides a ligand contact to Mn(2+). Residues Asn-252 to Ser-254, Arg-316, and Arg-321 contribute to the ATP site. Arg-316 provides a ligand contact to L-glutamate. Tyr-333–Glu-335 contributes to the ADP binding site. Glu-335 serves as a coordination point for Mn(2+). Arg-337 serves as a coordination point for L-glutamate.

It belongs to the glutamine synthetase family. Mg(2+) is required as a cofactor. Requires Mn(2+) as cofactor.

The protein localises to the cytoplasm. Its subcellular location is the cytosol. It is found in the microsome. The protein resides in the mitochondrion. It carries out the reaction L-glutamate + NH4(+) + ATP = L-glutamine + ADP + phosphate + H(+). Glutamine synthetase that catalyzes the ATP-dependent conversion of glutamate and ammonia to glutamine. The sequence is that of Glutamine synthetase from Panulirus argus (Caribbean spiny lobster).